Reading from the N-terminus, the 415-residue chain is Glutamyl-tRNA reductase (415 aa).

Substrate is bound by residues 49–52 (TCNR), serine 104, 109–111 (EPQ), and glutamine 115. Catalysis depends on cysteine 50, which acts as the Nucleophile. 184-189 (GAGEMI) is an NADP(+) binding site.

The protein belongs to the glutamyl-tRNA reductase family. Homodimer.

It catalyses the reaction (S)-4-amino-5-oxopentanoate + tRNA(Glu) + NADP(+) = L-glutamyl-tRNA(Glu) + NADPH + H(+). The protein operates within porphyrin-containing compound metabolism; protoporphyrin-IX biosynthesis; 5-aminolevulinate from L-glutamyl-tRNA(Glu): step 1/2. In terms of biological role, catalyzes the NADPH-dependent reduction of glutamyl-tRNA(Glu) to glutamate 1-semialdehyde (GSA). This chain is Glutamyl-tRNA reductase, found in Neisseria meningitidis serogroup C / serotype 2a (strain ATCC 700532 / DSM 15464 / FAM18).